The sequence spans 191 residues: MSAANATGEGQDAIAWNREMLPPGPEQDAVIKGITGEITEKGFVVASLDKLVNWGRTGSLWPMSFGLACCAVEMIHAYMPRYDLDRMGIIPRGSPRQSDVMIVAGTLTNKMAPALRRVYDQMAEPRWVISMGSCANGGGYYHYSYSVVRGCDRIVPVDVYVPGCPPTAEALIYGIFQLQKKIRRTGTILRG.

Positions 69, 70, 134, and 164 each coordinate [4Fe-4S] cluster.

The protein belongs to the complex I 20 kDa subunit family. NDH-1 is composed of 14 different subunits. Subunits NuoB, C, D, E, F, and G constitute the peripheral sector of the complex. It depends on [4Fe-4S] cluster as a cofactor.

The protein resides in the cell inner membrane. The enzyme catalyses a quinone + NADH + 5 H(+)(in) = a quinol + NAD(+) + 4 H(+)(out). Functionally, NDH-1 shuttles electrons from NADH, via FMN and iron-sulfur (Fe-S) centers, to quinones in the respiratory chain. Couples the redox reaction to proton translocation (for every two electrons transferred, four hydrogen ions are translocated across the cytoplasmic membrane), and thus conserves the redox energy in a proton gradient. This Gluconacetobacter diazotrophicus (strain ATCC 49037 / DSM 5601 / CCUG 37298 / CIP 103539 / LMG 7603 / PAl5) protein is NADH-quinone oxidoreductase subunit B 2.